Reading from the N-terminus, the 118-residue chain is MITKPDKNKVRQKRHRRVRGKLSGTADRPRLNVFRSNTGIYAQVIDDVAGVTLASASTLDKEVSKGTKTEQAVVVGKLVAERAVAKGISEVVFDRGGYLYHGRVKALADAARENGLKF.

Residues 1–25 (MITKPDKNKVRQKRHRRVRGKLSGT) are disordered. Basic residues predominate over residues 10–20 (VRQKRHRRVRG).

Belongs to the universal ribosomal protein uL18 family. In terms of assembly, part of the 50S ribosomal subunit; part of the 5S rRNA/L5/L18/L25 subcomplex. Contacts the 5S and 23S rRNAs.

Functionally, this is one of the proteins that bind and probably mediate the attachment of the 5S RNA into the large ribosomal subunit, where it forms part of the central protuberance. This Streptococcus gordonii (strain Challis / ATCC 35105 / BCRC 15272 / CH1 / DL1 / V288) protein is Large ribosomal subunit protein uL18.